The chain runs to 194 residues: Peroxiredoxin 2 (194 aa).

The Thioredoxin domain occupies 2 to 160; it reads PQLQKPAPAF…TLRLVQAFQY (159 aa). Residue Cys-47 is the Cysteine sulfenic acid (-SOH) intermediate of the active site. A Phosphothreonine modification is found at Thr-193. At Ser-194 the chain carries Phosphoserine.

The protein belongs to the peroxiredoxin family. AhpC/Prx1 subfamily. Homodimer; disulfide-linked, upon oxidation. 5 homodimers assemble to form a ring-like decamer. Also exists as a monomer. Post-translationally, the enzyme can be inactivated by further oxidation of the cysteine sulfenic acid (C(P)-SOH) to sulphinic acid (C(P)-SO2H) instead of its condensation to a disulfide bond. It can be reactivated by forming a transient disulfide bond with sulfiredoxin SRXN1, which reduces the cysteine sulfinic acid in an ATP- and Mg-dependent manner. Conjugated to URM1, a ubiquitin-like protein. As to expression, detected in the head and body (at protein level).

The protein resides in the cytoplasm. The enzyme catalyses a hydroperoxide + [thioredoxin]-dithiol = an alcohol + [thioredoxin]-disulfide + H2O. Thiol-specific peroxidase that catalyzes the reduction of hydrogen peroxide and organic hydroperoxides to water and alcohols, respectively. Plays a role in cell protection against oxidative stress by detoxifying peroxides and as sensor of hydrogen peroxide-mediated signaling events. Might participate in the signaling cascades of growth factors and tumor necrosis factor-alpha by regulating the intracellular concentrations of H(2)O(2). Reduces an intramolecular disulfide bond in GDPD5 that gates the ability to GDPD5 to drive postmitotic motor neuron differentiation. In Drosophila melanogaster (Fruit fly), this protein is Peroxiredoxin 2.